The sequence spans 130 residues: Large ribosomal subunit protein uL14 (130 aa).

Belongs to the universal ribosomal protein uL14 family. As to quaternary structure, part of the 50S ribosomal subunit. Forms a cluster with proteins L3 and L19. In the 70S ribosome, L14 and L19 interact and together make contacts with the 16S rRNA in bridges B5 and B8.

In terms of biological role, binds to 23S rRNA. Forms part of two intersubunit bridges in the 70S ribosome. The polypeptide is Large ribosomal subunit protein uL14 (Leptospira biflexa serovar Patoc (strain Patoc 1 / Ames)).